Here is a 159-residue protein sequence, read N- to C-terminus: NAD(P)H-quinone oxidoreductase subunit J, chloroplastic (159 aa).

The protein belongs to the complex I 30 kDa subunit family. As to quaternary structure, NDH is composed of at least 16 different subunits, 5 of which are encoded in the nucleus. As to expression, leaves.

It localises to the plastid. It is found in the chloroplast thylakoid membrane. The catalysed reaction is a plastoquinone + NADH + (n+1) H(+)(in) = a plastoquinol + NAD(+) + n H(+)(out). The enzyme catalyses a plastoquinone + NADPH + (n+1) H(+)(in) = a plastoquinol + NADP(+) + n H(+)(out). In terms of biological role, NDH shuttles electrons from NAD(P)H:plastoquinone, via FMN and iron-sulfur (Fe-S) centers, to quinones in the photosynthetic chain and possibly in a chloroplast respiratory chain. The immediate electron acceptor for the enzyme in this species is believed to be plastoquinone. Couples the redox reaction to proton translocation, and thus conserves the redox energy in a proton gradient. This chain is NAD(P)H-quinone oxidoreductase subunit J, chloroplastic, found in Zea mays (Maize).